A 176-amino-acid polypeptide reads, in one-letter code: 2-oxo-4-hydroxy-4-carboxy-5-ureidoimidazoline decarboxylase (176 aa).

Residue histidine 70 is the Proton donor; for OHCU decarboxylase activity of the active site. Residues proline 71, 83-87 (SQEEQ), and 118-122 (FIMAV) contribute to the substrate site. The segment at 72–96 (DLGERTEMTDESQEEQASAGLDRLP) is disordered.

The protein belongs to the OHCU decarboxylase family.

The catalysed reaction is 5-hydroxy-2-oxo-4-ureido-2,5-dihydro-1H-imidazole-5-carboxylate + H(+) = (S)-allantoin + CO2. It participates in purine metabolism; urate degradation; (S)-allantoin from urate: step 3/3. Catalyzes the stereoselective decarboxylation of 2-oxo-4-hydroxy-4-carboxy-5-ureidoimidazoline (OHCU) to (S)-allantoin. The sequence is that of 2-oxo-4-hydroxy-4-carboxy-5-ureidoimidazoline decarboxylase from Halalkalicoccus jeotgali (strain DSM 18796 / CECT 7217 / JCM 14584 / KCTC 4019 / B3).